A 414-amino-acid chain; its full sequence is Serine hydroxymethyltransferase (414 aa).

(6S)-5,6,7,8-tetrahydrofolate is bound by residues leucine 116 and 120–122 (GHL). Lysine 224 is modified (N6-(pyridoxal phosphate)lysine). Residues glutamate 240 and 348–350 (SPF) each bind (6S)-5,6,7,8-tetrahydrofolate.

This sequence belongs to the SHMT family. Homodimer. It depends on pyridoxal 5'-phosphate as a cofactor.

It localises to the cytoplasm. It catalyses the reaction (6R)-5,10-methylene-5,6,7,8-tetrahydrofolate + glycine + H2O = (6S)-5,6,7,8-tetrahydrofolate + L-serine. It functions in the pathway one-carbon metabolism; tetrahydrofolate interconversion. The protein operates within amino-acid biosynthesis; glycine biosynthesis; glycine from L-serine: step 1/1. In terms of biological role, catalyzes the reversible interconversion of serine and glycine with tetrahydrofolate (THF) serving as the one-carbon carrier. This reaction serves as the major source of one-carbon groups required for the biosynthesis of purines, thymidylate, methionine, and other important biomolecules. Also exhibits THF-independent aldolase activity toward beta-hydroxyamino acids, producing glycine and aldehydes, via a retro-aldol mechanism. The protein is Serine hydroxymethyltransferase of Campylobacter concisus (strain 13826).